The sequence spans 123 residues: Small ribosomal subunit protein uS12 (123 aa).

The interval Met-1 to Gln-25 is disordered. Residues Ile-8–Ser-21 are compositionally biased toward basic residues. The residue at position 89 (Asp-89) is a 3-methylthioaspartic acid.

It belongs to the universal ribosomal protein uS12 family. In terms of assembly, part of the 30S ribosomal subunit. Contacts proteins S8 and S17. May interact with IF1 in the 30S initiation complex.

Functionally, with S4 and S5 plays an important role in translational accuracy. In terms of biological role, interacts with and stabilizes bases of the 16S rRNA that are involved in tRNA selection in the A site and with the mRNA backbone. Located at the interface of the 30S and 50S subunits, it traverses the body of the 30S subunit contacting proteins on the other side and probably holding the rRNA structure together. The combined cluster of proteins S8, S12 and S17 appears to hold together the shoulder and platform of the 30S subunit. The protein is Small ribosomal subunit protein uS12 of Chlamydia pneumoniae (Chlamydophila pneumoniae).